We begin with the raw amino-acid sequence, 1050 residues long: Calmodulin-binding transcription activator 2 (1050 aa).

Residues 15 to 141 (IKQLLSEAQH…YLEVKGNRMS (127 aa)) constitute a DNA-binding region (CG-1). Polar residues-rich tracts occupy residues 141–171 (STSGTKENHSNSLSGTGSVNVDSTATRSSIL) and 183–196 (SRQASSSLQQNPEP). 2 disordered regions span residues 141–196 (STSG…NPEP) and 223–246 (NRDGWTSAHGNRVKGSNSQRSGDV). ANK repeat units follow at residues 661 to 690 (DGQGVLHLAAALGYDWAIKPILAAGVSINF) and 694 to 723 (NGWSALHWAAFSGREDTVAVLVSLGADAGA). IQ domains follow at residues 870 to 899 (VHAAAVQIQKKYRGWKKRKEFLLIRQRIVK) and 893 to 922 (IRQRIVKIQAHVRGHQVRKQYRAIIWSVGL). Residues 918–940 (WSVGLLEKIILRWRRKGSGLRGF) form a calmodulin-binding region. The stretch at 957 to 985 (QEDDYDFLKEGRKQTEERLQKALTRVKSM) forms a coiled coil. Position 984 is a phosphoserine (Ser984).

The protein belongs to the CAMTA family. In terms of tissue distribution, expressed in roots, stems, old leaves, petals, sepals, top of carpels, stigmas, stamen filaments, anthers and siliques, but not in pollen.

Its subcellular location is the nucleus. Its function is as follows. Transcription activator that binds to the DNA consensus sequence 5'-[ACG]CGCG[GTC]-3'. Regulates transcriptional activity in response to calcium signals. Binds calmodulin in a calcium-dependent manner. Involved in freezing tolerance in association with CAMTA1 and CAMTA3. Contributes together with CAMTA1 and CAMTA3 to the positive regulation of the cold-induced expression of DREB1A/CBF3, DREB1B/CBF1 and DREB1C/CBF2. Involved together with CAMTA3 and CAMTA4 in the positive regulation of a general stress response. Involved in tolerance to aluminum. Binds to the promoter of ALMT1 transporter and contributes to the positive regulation of aluminum-induced expression of ALMT1. The chain is Calmodulin-binding transcription activator 2 from Arabidopsis thaliana (Mouse-ear cress).